Consider the following 95-residue polypeptide: Defensin-A3 (95 aa).

The signal sequence occupies residues Met1–Ala19. The propeptide occupies Gln20 to Gln61. 3 disulfides stabilise this stretch: Cys66–Cys93, Cys68–Cys82, and Cys72–Cys92.

It belongs to the alpha-defensin family. In terms of tissue distribution, highly expressed in spleen, and expressed at lower levels in intestin and lung.

It is found in the secreted. Functionally, has antimicrobial activity. The polypeptide is Defensin-A3 (Ornithorhynchus anatinus (Duckbill platypus)).